We begin with the raw amino-acid sequence, 375 residues long: 23S rRNA (uracil(747)-C(5))-methyltransferase RlmC (375 aa).

[4Fe-4S] cluster is bound by residues C3, C11, C14, and C87. S-adenosyl-L-methionine contacts are provided by Q212, F241, E262, and N307. Residue C334 is the Nucleophile of the active site.

Belongs to the class I-like SAM-binding methyltransferase superfamily. RNA M5U methyltransferase family. RlmC subfamily.

It carries out the reaction uridine(747) in 23S rRNA + S-adenosyl-L-methionine = 5-methyluridine(747) in 23S rRNA + S-adenosyl-L-homocysteine + H(+). Its function is as follows. Catalyzes the formation of 5-methyl-uridine at position 747 (m5U747) in 23S rRNA. This chain is 23S rRNA (uracil(747)-C(5))-methyltransferase RlmC, found in Escherichia coli O139:H28 (strain E24377A / ETEC).